A 271-amino-acid polypeptide reads, in one-letter code: Adenosylcobinamide-GDP ribazoletransferase (271 aa).

The next 7 helical transmembrane spans lie at 4–24, 35–55, 58–78, 108–128, 135–155, 192–212, and 246–266; these read FLLALRTTFGFLSTIPVGMSM, YLQTFAGIVLGSMIGIFAYLT, FLPSTISAVLIMVFIYYITGL, SLGIGGVSYTVLALIALYASI, VLFFSDNAALIIAISLLIAEI, FVLGALVCVLAFGTLGIIGYI, and IIVLMVLTVAITAVNNGYGGL.

The protein belongs to the CobS family. Mg(2+) is required as a cofactor.

It is found in the cell membrane. It catalyses the reaction alpha-ribazole + adenosylcob(III)inamide-GDP = adenosylcob(III)alamin + GMP + H(+). The enzyme catalyses alpha-ribazole 5'-phosphate + adenosylcob(III)inamide-GDP = adenosylcob(III)alamin 5'-phosphate + GMP + H(+). It functions in the pathway cofactor biosynthesis; adenosylcobalamin biosynthesis; adenosylcobalamin from cob(II)yrinate a,c-diamide: step 7/7. Joins adenosylcobinamide-GDP and alpha-ribazole to generate adenosylcobalamin (Ado-cobalamin). Also synthesizes adenosylcobalamin 5'-phosphate from adenosylcobinamide-GDP and alpha-ribazole 5'-phosphate. The polypeptide is Adenosylcobinamide-GDP ribazoletransferase (Methanococcoides burtonii (strain DSM 6242 / NBRC 107633 / OCM 468 / ACE-M)).